A 525-amino-acid chain; its full sequence is Cyclic AMP-responsive element-binding protein 3-like protein 2 (525 aa).

Residues 1-382 (MEIMESGDPV…SCKAAGTQTG (382 aa)) lie on the Cytoplasmic side of the membrane. Disordered regions lie at residues 85–104 (LCGD…DDNF), 203–267 (EALQ…QGSG), and 309–338 (NKIS…SSEN). 2 stretches are compositionally biased toward polar residues: residues 90–102 (RPQS…SSDD) and 213–239 (SSHG…QSQA). The region spanning 299 to 362 (ALKKIRRKIK…RTLLQQLQRL (64 aa)) is the bZIP domain. Residues 301–330 (KKIRRKIKNKISAQESRRKKKEYMDSLEKR) are basic motif. Over residues 322–332 (EYMDSLEKRVE) the composition is skewed to basic and acidic residues. The interval 341–362 (LRKKVEVLESTNRTLLQQLQRL) is leucine-zipper. Residues 383 to 403 (TCLMMVVLCFAVIFGSFTQNL) form a helical; Signal-anchor for type II membrane protein membrane-spanning segment. Residues 404 to 525 (DMYSSSSKTI…ELDRTVNTTS (122 aa)) are Lumenal-facing. The S1P recognition signature appears at 433–436 (RKLL). 3 N-linked (GlcNAc...) asparagine glycosylation sites follow: Asn490, Asn509, and Asn522.

The protein belongs to the bZIP family. ATF subfamily. As to quaternary structure, binds DNA as a dimer. In terms of processing, upon ER stress, translocated to the Golgi apparatus, where it is processed by regulated intramembrane proteolysis (RIP) to release the cytosol-facing N-terminal transcription factor domain. The cleavage is performed sequentially by site-1 and site-2 proteases (S1P/mbtps1 and S2P/mbtps2).

It is found in the endoplasmic reticulum membrane. Its subcellular location is the nucleus. In terms of biological role, transcription factor involved in unfolded protein response (UPR). In the absence of endoplasmic reticulum (ER) stress, inserted into ER membranes, with N-terminal DNA-binding and transcription activation domains oriented toward the cytosolic face of the membrane. In response to ER stress, transported to the Golgi, where it is cleaved in a site-specific manner by resident proteases S1P/mbtps1 and S2P/mbtps2. The released N-terminal cytosolic domain is translocated to the nucleus to effect transcription of specific target genes. Plays a critical role in chondrogenesis. May protect neuroblastoma cells from ER stress-induced death. In vitro activates transcription of target genes via direct binding to the CRE site. This Xenopus laevis (African clawed frog) protein is Cyclic AMP-responsive element-binding protein 3-like protein 2 (creb3l2).